The chain runs to 690 residues: Glutamate--cysteine ligase (690 aa).

Composition is skewed to low complexity over residues 574–585 (QQQNGHVNNNNN) and 598–619 (NGSTTTTNGTNSGSGITETNGT). Positions 574 to 620 (QQQNGHVNNNNNNDKKTKNDPIIVNGSTTTTNGTNSGSGITETNGTM) are disordered.

The protein belongs to the glutamate--cysteine ligase type 3 family.

It catalyses the reaction L-cysteine + L-glutamate + ATP = gamma-L-glutamyl-L-cysteine + ADP + phosphate + H(+). It functions in the pathway sulfur metabolism; glutathione biosynthesis; glutathione from L-cysteine and L-glutamate: step 1/2. The protein is Glutamate--cysteine ligase (GCS1) of Candida albicans (Yeast).